The chain runs to 486 residues: Malonate-semialdehyde dehydrogenase (486 aa).

Residues Phe-154, Lys-178, Glu-181, Arg-182, and Ser-231 each coordinate NAD(+). Catalysis depends on Cys-286, which acts as the Nucleophile. An NAD(+)-binding site is contributed by Glu-386.

Belongs to the aldehyde dehydrogenase family. IolA subfamily. Homotetramer.

It catalyses the reaction 3-oxopropanoate + NAD(+) + CoA + H2O = hydrogencarbonate + acetyl-CoA + NADH + H(+). It carries out the reaction 2-methyl-3-oxopropanoate + NAD(+) + CoA + H2O = propanoyl-CoA + hydrogencarbonate + NADH + H(+). It participates in polyol metabolism; myo-inositol degradation into acetyl-CoA; acetyl-CoA from myo-inositol: step 7/7. In terms of biological role, catalyzes the oxidation of malonate semialdehyde (MSA) and methylmalonate semialdehyde (MMSA) into acetyl-CoA and propanoyl-CoA, respectively. Is involved in a myo-inositol catabolic pathway. Bicarbonate, and not CO2, is the end-product of the enzymatic reaction. This chain is Malonate-semialdehyde dehydrogenase, found in Bacillus cytotoxicus (strain DSM 22905 / CIP 110041 / 391-98 / NVH 391-98).